Consider the following 283-residue polypeptide: Thymidylate synthase (283 aa).

R22 lines the dUMP pocket. The active-site Nucleophile is the C160. Residues 180 to 183 (RSCD), N191, and 221 to 223 (HIY) contribute to the dUMP site. D183 serves as a coordination point for (6R)-5,10-methylene-5,6,7,8-tetrahydrofolate. S282 provides a ligand contact to (6R)-5,10-methylene-5,6,7,8-tetrahydrofolate.

The protein belongs to the thymidylate synthase family. Bacterial-type ThyA subfamily. As to quaternary structure, homodimer.

It localises to the cytoplasm. The catalysed reaction is dUMP + (6R)-5,10-methylene-5,6,7,8-tetrahydrofolate = 7,8-dihydrofolate + dTMP. The protein operates within pyrimidine metabolism; dTTP biosynthesis. Functionally, catalyzes the reductive methylation of 2'-deoxyuridine-5'-monophosphate (dUMP) to 2'-deoxythymidine-5'-monophosphate (dTMP) while utilizing 5,10-methylenetetrahydrofolate (mTHF) as the methyl donor and reductant in the reaction, yielding dihydrofolate (DHF) as a by-product. This enzymatic reaction provides an intracellular de novo source of dTMP, an essential precursor for DNA biosynthesis. The protein is Thymidylate synthase of Haemophilus influenzae (strain 86-028NP).